A 660-amino-acid polypeptide reads, in one-letter code: Threonine--tRNA ligase (660 aa).

The TGS domain occupies Met1–Arg64. Positions Asp245–Pro547 are catalytic. Cys341, His392, and His524 together coordinate Zn(2+).

This sequence belongs to the class-II aminoacyl-tRNA synthetase family. Homodimer. Requires Zn(2+) as cofactor.

Its subcellular location is the cytoplasm. It catalyses the reaction tRNA(Thr) + L-threonine + ATP = L-threonyl-tRNA(Thr) + AMP + diphosphate + H(+). Functionally, catalyzes the attachment of threonine to tRNA(Thr) in a two-step reaction: L-threonine is first activated by ATP to form Thr-AMP and then transferred to the acceptor end of tRNA(Thr). Also edits incorrectly charged L-seryl-tRNA(Thr). This is Threonine--tRNA ligase from Sinorhizobium medicae (strain WSM419) (Ensifer medicae).